A 444-amino-acid polypeptide reads, in one-letter code: Probable galactarate/D-glucarate transporter GarP (444 aa).

Over 1 to 11 (MILDTVDEKKK) the chain is Cytoplasmic. Residues 12–32 (GVHTRYLILLIIFIVTAVNYA) form a helical membrane-spanning segment. At 33–56 (DRATLSIAGTEVAKELQLSAVSMG) the chain is on the periplasmic side. A helical membrane pass occupies residues 57-77 (YIFSAFGWAYLLMQIPGGWLL). Topologically, residues 78 to 89 (DKFGSKKVYTYS) are cytoplasmic. 2 helical membrane-spanning segments follow: residues 90 to 110 (LFFW…PLAW) and 111 to 131 (AGIS…PSFP). Over 132 to 157 (ANARIVAAWFPTKERGTASAIFNSAQ) the chain is Cytoplasmic. The next 2 membrane-spanning stretches (helical) occupy residues 158-178 (YFSL…WGWE) and 179-199 (HVFT…IKLI). Over 200-252 (HNPTDHPRMSAEELKFISENGAVVDMDHKKPGSAAASGPKLHYIKQLLSNRMM) the chain is Cytoplasmic. The helical transmembrane segment at 253-273 (LGVFFGQYFINTITWFFLTWF) threads the bilayer. Topologically, residues 274-288 (PIYLVQEKGMSILKV) are periplasmic. Residues 289–309 (GLVASIPALCGFAGGVLGGVF) traverse the membrane as a helical segment. The Cytoplasmic portion of the chain corresponds to 310 to 319 (SDYLIKRGLS). A helical membrane pass occupies residues 320 to 340 (LTLARKLPIVLGMLLASTIIL). The Periplasmic segment spans residues 341 to 350 (CNYTNNTTLV). The helical transmembrane segment at 351–371 (VMLMALAFFGKGFGALGWPVI) threads the bilayer. The Cytoplasmic segment spans residues 372–385 (SDTAPKEIVGLCGG). The helical transmembrane segment at 386–406 (VFNVFGNVASIVTPLVIGYLV) threads the bilayer. At 407–413 (SELHSFN) the chain is on the periplasmic side. A helical transmembrane segment spans residues 414-434 (AALVFVGCSALMAMVCYLFVV). The Cytoplasmic segment spans residues 435-444 (GDIKRMELQK).

Belongs to the major facilitator superfamily. Phthalate permease family.

The protein localises to the cell inner membrane. It catalyses the reaction galactarate(in) + H(+)(in) = galactarate(out) + H(+)(out). The catalysed reaction is D-glucarate(in) + H(+)(in) = D-glucarate(out) + H(+)(out). It carries out the reaction (R)-glycerate(in) + H(+)(in) = (R)-glycerate(out) + H(+)(out). Probably involved in the uptake of galactarate and/or D-glucarate. May also transport D-glycerate. The protein is Probable galactarate/D-glucarate transporter GarP of Escherichia coli (strain K12).